We begin with the raw amino-acid sequence, 254 residues long: Urease accessory protein UreD (254 aa).

It belongs to the UreD family. In terms of assembly, ureD, UreF and UreG form a complex that acts as a GTP-hydrolysis-dependent molecular chaperone, activating the urease apoprotein by helping to assemble the nickel containing metallocenter of UreC. The UreE protein probably delivers the nickel.

It is found in the cytoplasm. Functionally, required for maturation of urease via the functional incorporation of the urease nickel metallocenter. The polypeptide is Urease accessory protein UreD (Streptomyces coelicolor (strain ATCC BAA-471 / A3(2) / M145)).